The following is a 470-amino-acid chain: Zinc finger protein pat-9 (470 aa).

The interval 1–25 is disordered; it reads MENRTPMQHHSGYEIVKSEPPSTPK. 3 consecutive C2H2-type zinc fingers follow at residues 84 to 106, 112 to 134, and 140 to 162; these read YPCN…QNSH, FECD…KRIH, and FVCT…KDMH. The interval 191–235 is disordered; that stretch reads MEQEENGGLPASSSASSVISHPLITTTSGNKKRSKAAKAKQTPSS. The short motif at 221 to 230 is the Nuclear localization signal element; the sequence is KKRSKAAKAK.

The protein belongs to the krueppel C2H2-type zinc-finger protein family. Expressed in body wall muscle and gonad (at protein level).

It is found in the nucleus. It localises to the chromosome. Functionally, probable transcription factor; required for proper organization of muscle myofilaments and for their recruitment to the M line. This Caenorhabditis elegans protein is Zinc finger protein pat-9.